The chain runs to 583 residues: Orphan steroid hormone receptor 2 (583 aa).

The nuclear receptor DNA-binding region spans 84 to 159 (IELCAVCGDK…MGMKSDSVQC (76 aa)). 2 consecutive NR C4-type zinc fingers follow at residues 87 to 107 (CAVCGDKASGRHYGAISCEGC) and 123 to 142 (CRGNKDCQIIKHNRNRCQYC). The region spanning 248-563 (TLASVVTSLA…SIIPYILRME (316 aa)) is the NR LBD domain.

It belongs to the nuclear hormone receptor family. NR2 subfamily. Binds DNA as a monomer. In terms of tissue distribution, expressed uniformly in the early embryo. In contrast, larval expression is localized to the epaulettes and mouth epithelium. Expressed in multiple adult organs including lantern muscle, tubefeet, intestine, coelomocytes and gonads. In the adult ovaries and testes, expression is specifically localized to the smooth muscle epithelial layer of cells which surround the ovarioles and acini, respectively (at protein level).

It localises to the cytoplasm. The protein resides in the nucleus. Its function is as follows. Orphan nuclear receptor. Binds to the hormone response element in the upstream promoter region of the CYIIIB gene in vitro. Both isoform 1 and isoform 2 bind DNA. This Strongylocentrotus purpuratus (Purple sea urchin) protein is Orphan steroid hormone receptor 2.